We begin with the raw amino-acid sequence, 304 residues long: Choline-phosphate cytidylyltransferase 2 (304 aa).

CTP contacts are provided by residues 28–36 and Lys66; that span reads IFDLFHFGH. Lys66 and Trp95 together coordinate substrate. Residues 112–113, Tyr117, and 142–146 contribute to the CTP site; these read HD and RTEGI. Residues 266-292 are disordered; it reads QNGLTISKDNDDEQMSDDNEFAEEDCV. The span at 275-291 shows a compositional bias: acidic residues; it reads NDDEQMSDDNEFAEEDC.

This sequence belongs to the cytidylyltransferase family.

The catalysed reaction is phosphocholine + CTP + H(+) = CDP-choline + diphosphate. Its pathway is phospholipid metabolism; phosphatidylcholine biosynthesis; phosphatidylcholine from phosphocholine: step 1/2. Its function is as follows. Plays an important role in the biosynthesis of the phospholipid phosphatidylcholine. Catalyzes the formation of CDP-choline. The protein is Choline-phosphate cytidylyltransferase 2 of Arabidopsis thaliana (Mouse-ear cress).